Consider the following 197-residue polypeptide: Autophagy-related protein 33 (197 aa).

The next 3 membrane-spanning stretches (helical) occupy residues 10 to 30, 52 to 72, and 78 to 98; these read GIAV…SLIT, AATA…FGAP, and PYLL…GCAS. Phosphoserine occurs at positions 127 and 129. Basic and acidic residues predominate over residues 135–148; it reads EDNHASENTPRDGK. A disordered region spans residues 135–154; the sequence is EDNHASENTPRDGKPAATTV. Residues 172 to 192 form a helical membrane-spanning segment; that stretch reads LIAATAIAIVGFVQAVIGVYG.

It belongs to the ATG33 family.

Its subcellular location is the mitochondrion membrane. In terms of biological role, involved in the selective degradation of mitochondria via autophagy during starvation and at post-log phase. In Saccharomyces cerevisiae (strain ATCC 204508 / S288c) (Baker's yeast), this protein is Autophagy-related protein 33 (ATG33).